Reading from the N-terminus, the 181-residue chain is ATP synthase subunit delta (181 aa).

It belongs to the ATPase delta chain family. As to quaternary structure, F-type ATPases have 2 components, F(1) - the catalytic core - and F(0) - the membrane proton channel. F(1) has five subunits: alpha(3), beta(3), gamma(1), delta(1), epsilon(1). F(0) has three main subunits: a(1), b(2) and c(10-14). The alpha and beta chains form an alternating ring which encloses part of the gamma chain. F(1) is attached to F(0) by a central stalk formed by the gamma and epsilon chains, while a peripheral stalk is formed by the delta and b chains.

The protein localises to the cell membrane. Functionally, f(1)F(0) ATP synthase produces ATP from ADP in the presence of a proton or sodium gradient. F-type ATPases consist of two structural domains, F(1) containing the extramembraneous catalytic core and F(0) containing the membrane proton channel, linked together by a central stalk and a peripheral stalk. During catalysis, ATP synthesis in the catalytic domain of F(1) is coupled via a rotary mechanism of the central stalk subunits to proton translocation. In terms of biological role, this protein is part of the stalk that links CF(0) to CF(1). It either transmits conformational changes from CF(0) to CF(1) or is implicated in proton conduction. The chain is ATP synthase subunit delta from Mycoplasmoides gallisepticum (strain R(low / passage 15 / clone 2)) (Mycoplasma gallisepticum).